The sequence spans 185 residues: Probable DNA-directed RNA polymerase subunit delta (185 aa).

An HTH HARE-type domain is found at 14–81 (LSMIEVAHAI…GDNTWGLRAW (68 aa)). A disordered region spans residues 90–185 (ATVGENEEDE…DEEDEDEDDE (96 aa)). Composition is skewed to acidic residues over residues 117 to 167 (DTDD…DDGI) and 175 to 185 (HDEEDEDEDDE).

This sequence belongs to the RpoE family. In terms of assembly, RNAP is composed of a core of 2 alpha, a beta and a beta' subunits. The core is associated with a delta subunit and one of several sigma factors.

Participates in both the initiation and recycling phases of transcription. In the presence of the delta subunit, RNAP displays an increased specificity of transcription, a decreased affinity for nucleic acids, and an increased efficiency of RNA synthesis because of enhanced recycling. The polypeptide is Probable DNA-directed RNA polymerase subunit delta (Limosilactobacillus reuteri (strain DSM 20016) (Lactobacillus reuteri)).